Consider the following 85-residue polypeptide: Small ribosomal subunit protein bS18A (85 aa).

The protein belongs to the bacterial ribosomal protein bS18 family. Part of the 30S ribosomal subunit. Forms a tight heterodimer with protein bS6.

In terms of biological role, binds as a heterodimer with protein bS6 to the central domain of the 16S rRNA, where it helps stabilize the platform of the 30S subunit. This chain is Small ribosomal subunit protein bS18A, found in Mycolicibacterium smegmatis (strain ATCC 700084 / mc(2)155) (Mycobacterium smegmatis).